The following is an 804-amino-acid chain: Probable copper-exporting P-type ATPase (804 aa).

The Cytoplasmic segment spans residues 1-101; sequence MVKDTYISSA…VEHLSRMKRK (101 aa). An HMA 1 domain is found at 16–82; sequence MERTVRVTGM…VIEDLGYGVV (67 aa). Cu(+) contacts are provided by Cys-27 and Cys-30. Residues 102–122 form a helical membrane-spanning segment; the sequence is LYVAAFAGVLLLFLAHFISLP. Topologically, residues 123-128 are extracellular; that stretch reads YEDFVQ. The helical transmembrane segment at 129–149 threads the bilayer; the sequence is LLIALPAIFYSGSSIFKAAFS. Over 150–159 the chain is Cytoplasmic; the sequence is ALRRRTLNMD. Residues 160–180 traverse the membrane as a helical segment; it reads VMYSMGVGAAFLASVLSTAGV. Residues 181–186 lie on the Extracellular side of the membrane; sequence LPREYS. The chain crosses the membrane as a helical span at residues 187 to 204; that stretch reads FYETSVLLLAFLLLGRTL. Over 205 to 339 the chain is Cytoplasmic; the sequence is EARAKSRTGE…PIQRLADKVV (135 aa). A helical membrane pass occupies residues 340 to 360; it reads AYFIPTVLLVAISAFIYWYFI. Residues 361–364 lie on the Extracellular side of the membrane; the sequence is AHAP. A helical membrane pass occupies residues 365–385; it reads LLFAFTTLIAVLVVACPCAFG. Over 386 to 680 the chain is Cytoplasmic; sequence LATPTALTVG…KIKQNIFWAL (295 aa). Catalysis depends on Asp-424, which acts as the 4-aspartylphosphate intermediate. ATP contacts are provided by residues 457–462 and 490–501; these read ERRSEH and GEGVVADGILVG. 2 residues coordinate Mg(2+): Asp-618 and Asp-622. A helical membrane pass occupies residues 681–701; that stretch reads IYNVILIPAAAGLLYPIFGVV. The Extracellular segment spans residues 702-704; it reads FRP. The helical transmembrane segment at 705 to 725 threads the bilayer; it reads EFAGLAMAMSSVSVVANSLLL. The Cytoplasmic portion of the chain corresponds to 726 to 804; the sequence is RNYVPPIRRG…AAGYQAKLRS (79 aa). The 62-residue stretch at 740 to 801 folds into the HMA 2 domain; the sequence is EKIVLELSGL…AVEAAGYQAK (62 aa). The Cu(+) site is built by Cys-751 and Cys-754.

This sequence belongs to the cation transport ATPase (P-type) (TC 3.A.3) family. Type IB subfamily. In terms of assembly, interacts with CopZ probably in the CopZ Cu(+)-bound form.

It is found in the cell membrane. The enzyme catalyses Cu(+)(in) + ATP + H2O = Cu(+)(out) + ADP + phosphate + H(+). With respect to regulation, activated by Cu(+) and Ag(+) and inhibited by vanadate. Activated by CopZ in its Cu(+)-bound form. Probably involved in copper and silver export. This is Probable copper-exporting P-type ATPase (copA) from Archaeoglobus fulgidus (strain ATCC 49558 / DSM 4304 / JCM 9628 / NBRC 100126 / VC-16).